The sequence spans 258 residues: Nuclear egress protein 2 (258 aa).

The Perinuclear space portion of the chain corresponds to 1–228 (MLKEKMYDEL…TVPIFARRNN (228 aa)). A helical transmembrane segment spans residues 229–249 (ILCGFLVAALLIVCYVIFKEF). The Nuclear portion of the chain corresponds to 250-258 (ALSADFSAV).

Belongs to the herpesviridae NEC2 protein family. As to quaternary structure, forms a heterohexameric complex with NEC1. Phosphorylated.

The protein resides in the host nucleus inner membrane. Functionally, plays an essential role in virion nuclear egress, the first step of virion release from infected cell. Within the host nucleus, NEC1 interacts with the newly formed capsid through the vertexes and directs it to the inner nuclear membrane by associating with NEC2. Induces the budding of the capsid at the inner nuclear membrane as well as its envelopment into the perinuclear space. There, the NEC1/NEC2 complex promotes the fusion of the enveloped capsid with the outer nuclear membrane and the subsequent release of the viral capsid into the cytoplasm where it will reach the secondary budding sites in the host Golgi or trans-Golgi network. The polypeptide is Nuclear egress protein 2 (Homo sapiens (Human)).